We begin with the raw amino-acid sequence, 174 residues long: CDP-archaeol synthase (174 aa).

Helical transmembrane passes span 51 to 71 (LIGLLQILLAPHIAPYLAGFI), 74 to 94 (SLLVGYSYIALITMPFGALLG), 112 to 132 (MLPIADQLDFVAGAWVLTFLL), and 136 to 156 (WLLANFTIWVAIAVILIIPVF).

It belongs to the CDP-archaeol synthase family. Mg(2+) serves as cofactor.

The protein resides in the cell membrane. It carries out the reaction 2,3-bis-O-(geranylgeranyl)-sn-glycerol 1-phosphate + CTP + H(+) = CDP-2,3-bis-O-(geranylgeranyl)-sn-glycerol + diphosphate. It participates in membrane lipid metabolism; glycerophospholipid metabolism. Catalyzes the formation of CDP-2,3-bis-(O-geranylgeranyl)-sn-glycerol (CDP-archaeol) from 2,3-bis-(O-geranylgeranyl)-sn-glycerol 1-phosphate (DGGGP) and CTP. This reaction is the third ether-bond-formation step in the biosynthesis of archaeal membrane lipids. In Methanocella arvoryzae (strain DSM 22066 / NBRC 105507 / MRE50), this protein is CDP-archaeol synthase.